The chain runs to 336 residues: UPF0324 membrane protein SP_0034 (336 aa).

8 helical membrane passes run 65–84 (LLQY…QVFA), 91–113 (PVIL…FFAL), 118–140 (ATLV…APVI), 153–175 (VIFF…LHLS), 211–233 (SATI…LSYW), 249–271 (VFPL…TSLG), 286–305 (FLIV…VAMV), and 312–334 (ILLG…TLIG).

It belongs to the UPF0324 family.

It is found in the cell membrane. The sequence is that of UPF0324 membrane protein SP_0034 from Streptococcus pneumoniae serotype 4 (strain ATCC BAA-334 / TIGR4).